The following is a 466-amino-acid chain: Asparagine--tRNA ligase (466 aa).

This sequence belongs to the class-II aminoacyl-tRNA synthetase family. In terms of assembly, homodimer.

The protein resides in the cytoplasm. It catalyses the reaction tRNA(Asn) + L-asparagine + ATP = L-asparaginyl-tRNA(Asn) + AMP + diphosphate + H(+). This chain is Asparagine--tRNA ligase, found in Aliivibrio fischeri (strain ATCC 700601 / ES114) (Vibrio fischeri).